Reading from the N-terminus, the 128-residue chain is Small ribosomal subunit protein eS8 (128 aa).

This sequence belongs to the eukaryotic ribosomal protein eS8 family. As to quaternary structure, part of the 30S ribosomal subunit.

The chain is Small ribosomal subunit protein eS8 from Methanococcus maripaludis (strain C5 / ATCC BAA-1333).